The primary structure comprises 111 residues: Large ribosomal subunit protein P2 (111 aa).

Residues 81 to 111 form a disordered region; that stretch reads AAGGAAAPAAEEKKEEEKEESDEDMGFGLFD. Phosphoserine is present on Ser101.

This sequence belongs to the eukaryotic ribosomal protein P1/P2 family. P1 and P2 exist as dimers at the large ribosomal subunit.

Functionally, plays an important role in the elongation step of protein synthesis. This Aspergillus fumigatus (strain ATCC MYA-4609 / CBS 101355 / FGSC A1100 / Af293) (Neosartorya fumigata) protein is Large ribosomal subunit protein P2.